Here is a 423-residue protein sequence, read N- to C-terminus: Phthiocerol/phthiodiolone dimycocerosyl transferase (423 aa).

Residue His-125 is the Proton acceptor of the active site.

It belongs to the acyltransferase PapA5 family. Monomer. Interacts directly with the acyl carrier protein (ACP) domain of the mycocerosic acid synthase (mas) protein.

It catalyses the reaction 2 a mycocerosyl-[mycocerosic acid synthase] + a phthiocerol = a dimycocerosyl phthiocerol + 2 holo-[mycocerosic acid synthase].. The catalysed reaction is 2 a mycocerosyl-[mycocerosic acid synthase] + a phthiodiolone = a dimycocerosyl phthiodiolone + 2 holo-[mycocerosic acid synthase].. The enzyme catalyses 2 a mycocerosyl-[mycocerosic acid synthase] + a phenolphthiocerol = a dimycocerosyl phenolphthiocerol + 2 holo-[mycocerosic acid synthase].. Functionally, catalyzes diesterification of phthiocerol, phthiodiolone, and phenolphthiocerol with mycocerosic acids, the final step in the phthiocerol, phthiodiolone and phenolphthiocerol dimycocerosate esters (PDIM) synthesis. Can directly transfer the mycocerosate bound to the mycocerosic acid synthase (mas) onto the substrate alcohols. This Mycobacterium leprae (strain TN) protein is Phthiocerol/phthiodiolone dimycocerosyl transferase (papA5).